The chain runs to 2809 residues: MTLEGLYLARGPLARLLLAWSALLCMAGGQGRWDGALEAAGPGRVRRRGSPGILQGPNVCGSRFHAYCCPGWRTFPGRSQCVVPICRRACGEGFCSQPNLCTCADGTLAPSCGVSRGSGCSVSCMNGGTCRGASCLCQKGYTGTVCGQPICDRGCHNGGRCIGPNRCACVYGFMGPQCERDYRTGPCFGQVGPEGCQHQLTGLVCTKALCCATVGRAWGLPCELCPAQPHPCRRGFIPNIHTGACQDVDECQAVPGLCQGGSCVNMVGSFHCRCPVGHRLSDSSAACEDYRAGACFSVLFGGRCAGDLAGHYTRRQCCCDRGRCWAAGPVPELCPPRGSNEFQQLCAQRLPLLPGHPGLFPGLLGFGSNGMGPPLGPARLNPHGSDARGIPSLGPGNSNIGTATLNQTIDICRHFTNLCLNGRCLPTPSSYRCECNVGYTQDVRGECIDVDECTSSPCHHGDCVNIPGTYHCRCYPGFQATPTRQACVDVDECIVSGGLCHLGRCVNTEGSFQCVCNAGFELSPDGKNCVDHNECATSTMCVNGVCLNEDGSFSCLCKPGFLLAPGGHYCMDIDECQTPGICVNGHCTNTEGSFRCQCLGGLAVGTDGRVCVDTHVRSTCYGAIEKGSCARPFPGTVTKSECCCANPDHGFGEPCQLCPAKDSAEFQALCSSGLGITTDGRDINECALDPEVCANGVCENLRGSYRCVCNLGYEAGASGKDCTDVDECALNSLLCDNGWCQNSPGSYSCSCPPGFHFWQDTEICKDVDECLSSPCVSGVCRNLAGSYTCKCGPGSRLDPSGTFCLDSTKGTCWLKIQESRCEVNLQGASLRSECCATLGAAWGSPCERCEIDPACARGFARMTGVTCDDVNECESFPGVCPNGRCVNTAGSFRCECPEGLMLDASGRLCVDVRLEPCFLRWDEDECGVTLPGKYRMDVCCCSIGAVWGVECEACPDPESLEFASLCPRGLGFASRDFLSGRPFYKDVNECKVFPGLCTHGTCRNTVGSFHCACAGGFALDAQERNCTDIDECRISPDLCGQGTCVNTPGSFECECFPGYESGFMLMKNCMDVDECARDPLLCRGGTCTNTDGSYKCQCPPGHELTAKGTACEDIDECSLSDGLCPHGQCVNVIGAFQCSCHAGFQSTPDRQGCVDINECRVQNGGCDVHCINTEGSYRCSCGQGYSLMPDGRACADVDECEENPRVCDQGHCTNMPGGHRCLCYDGFMATPDMRTCVDVDECDLNPHICLHGDCENTKGSFVCHCQLGYMVRKGATGCSDVDECEVGGHNCDSHASCLNIPGSFSCRCLPGWVGDGFECHDLDECVSQEHRCSPRGDCLNVPGSYRCTCRQGFAGDGFFCEDRDECAENVDLCDNGQCLNAPGGYRCECEMGFDPTEDHRACQDVDECAQGNLCAFGSCENLPGMFRCICNGGYELDRGGGNCTDINECADPVNCINGVCINTPGSYLCSCPQDFELNPSGVGCVDTRAGNCFLETHDRGDSGISCSAEIGVGVTRASCCCSLGRAWGNPCELCPMANTTEYRTLCPGGEGFQPNRITVILEDIDECQELPGLCQGGDCVNTFGSFQCECPPGYHLSEHTRICEDIDECSTHSGICGPGTCYNTLGNYTCVCPAEYLQVNGGNNCMDMRKSVCFRHYNGTCQNELAFNVTRKMCCCSYNIGQAWNRPCEACPTPISPDYQILCGNQAPGFLTDIHTGKPLDIDECGEIPAICANGICINQIGSFRCECPAGFNYNSILLACEDVDECGSRESPCQQNADCINIPGSYRCKCTRGYKLSPGGACVGRNECREIPNVCSHGDCMDTEGSYMCLCHRGFQASADQTLCMDIDECDRQPCGNGTCKNIIGSYNCLCFPGFVVTHNGDCVDFDECTTLVGQVCRFGHCLNTAGSFHCLCQDGFELTADGKNCVDTNECLSLAGTCLPGTCQNLEGSFRCICPPGFQVQSDHCIDIDECSEEPNLCLFGTCTNSPGSFQCLCPPGFVLSDNGHRCFDTRQSFCFTRFEAGKCSVPKAFNTTKTRCCCSKRPGEGWGDPCELCPQEGSAAFQELCPFGHGAVPGPDDSREDVNECAENPGVCTNGVCVNTDGSFRCECPFGYSLDFTGINCVDTDECSVGHPCGQGTCTNVIGGFECACADGFEPGLMMTCEDIDECSLNPLLCAFRCHNTEGSYLCTCPAGYTLREDGAMCRDVDECADGQQDCHARGMECKNLIGTFACVCPPGMRPLPGSGEGCTDDNECHAQPDLCVNGRCVNTAGSFRCDCDEGFQPSPTLTECHDIRQGPCFAEVLQTMCRSLSSSSEAVTRAECCCGGGRGWGPRCELCPLPGTSAYRKLCPHGSGYTAEGRDVDECRMLAHLCAHGECINSLGSFRCHCQAGYTPDATATTCLDMDECSQVPKPCTFLCKNTKGSFLCSCPRGYLLEEDGRTCKDLDECTSRQHNCQFLCVNTVGAFTCRCPPGFTQHHQACFDNDECSAQPGPCGAHGHCHNTPGSFRCECHQGFTLVSSGHGCEDVNECDGPHRCQHGCQNQLGGYRCSCPQGFTQHSQWAQCVDENECALSPPTCGSASCRNTLGGFRCVCPSGFDFDQALGGCQEVDECAGRRGPCSYSCANTPGGFLCGCPQGYFRAGQGHCVSGLGFSPGPQDTPDKEELLSSEACYECKINGLSPRDRPRRSAHRDHQVNLATLDSEALLTLGLNLSHLGRAERILELRPALEGLEGRIRYVIVRGNEQGFFRMHHLRGVSSLQLGRRRPGPGTYRLEVVSHMAGPWGVQPEGQPGPWGQALRLKVQLQLL.

Positions 1–31 are cleaved as a signal peptide; that stretch reads MTLEGLYLARGPLARLLLAWSALLCMAGGQG. The propeptide occupies 32 to 48; it reads RWDGALEAAGPGRVRRR. Residues 147 to 179 enclose the EGF-like 1 domain; it reads GQPICDRGCHNGGRCIGPNRCACVYGFMGPQCE. 3 disulfide bridges follow: Cys-151-Cys-161, Cys-155-Cys-167, and Cys-169-Cys-178. The TB 1 domain occupies 185-237; the sequence is GPCFGQVGPEGCQHQLTGLVCTKALCCATVGRAWGLPCELCPAQPHPCRRGFI. One can recognise an EGF-like 2; calcium-binding domain in the interval 247–288; sequence DVDECQAVPGLCQGGSCVNMVGSFHCRCPVGHRLSDSSAACE. Intrachain disulfides connect Cys-251–Cys-263, Cys-258–Cys-272, and Cys-274–Cys-287. The 54-residue stretch at 293-346 folds into the TB 2 domain; that stretch reads GACFSVLFGGRCAGDLAGHYTRRQCCCDRGRCWAAGPVPELCPPRGSNEFQQLC. Asn-406 carries an N-linked (GlcNAc...) asparagine glycan. The region spanning 408 to 448 is the EGF-like 3 domain; that stretch reads TIDICRHFTNLCLNGRCLPTPSSYRCECNVGYTQDVRGECI. 15 cysteine pairs are disulfide-bonded: Cys-412-Cys-424, Cys-419-Cys-433, Cys-435-Cys-447, Cys-453-Cys-463, Cys-458-Cys-472, Cys-474-Cys-487, Cys-493-Cys-505, Cys-500-Cys-514, Cys-516-Cys-529, Cys-535-Cys-546, Cys-541-Cys-555, Cys-557-Cys-570, Cys-576-Cys-587, Cys-582-Cys-596, and Cys-598-Cys-611. The EGF-like 4; calcium-binding domain occupies 449–488; that stretch reads DVDECTSSPCHHGDCVNIPGTYHCRCYPGFQATPTRQACV. One can recognise an EGF-like 5; calcium-binding domain in the interval 489–530; that stretch reads DVDECIVSGGLCHLGRCVNTEGSFQCVCNAGFELSPDGKNCV. The region spanning 531-571 is the EGF-like 6; calcium-binding domain; it reads DHNECATSTMCVNGVCLNEDGSFSCLCKPGFLLAPGGHYCM. Residues 572 to 612 form the EGF-like 7; calcium-binding domain; the sequence is DIDECQTPGICVNGHCTNTEGSFRCQCLGGLAVGTDGRVCV. The 53-residue stretch at 618 to 670 folds into the TB 3 domain; sequence STCYGAIEKGSCARPFPGTVTKSECCCANPDHGFGEPCQLCPAKDSAEFQALC. The EGF-like 8; calcium-binding domain occupies 682-723; the sequence is DINECALDPEVCANGVCENLRGSYRCVCNLGYEAGASGKDCT. Intrachain disulfides connect Cys-686–Cys-698, Cys-693–Cys-707, Cys-709–Cys-722, Cys-728–Cys-740, Cys-735–Cys-749, Cys-751–Cys-764, Cys-770–Cys-780, Cys-775–Cys-789, and Cys-791–Cys-804. The EGF-like 9; calcium-binding domain occupies 724–765; sequence DVDECALNSLLCDNGWCQNSPGSYSCSCPPGFHFWQDTEICK. The region spanning 766 to 805 is the EGF-like 10; calcium-binding domain; it reads DVDECLSSPCVSGVCRNLAGSYTCKCGPGSRLDPSGTFCL. The 52-residue stretch at 810 to 861 folds into the TB 4 domain; the sequence is GTCWLKIQESRCEVNLQGASLRSECCATLGAAWGSPCERCEIDPACARGFAR. An EGF-like 11; calcium-binding domain is found at 869–910; sequence DVNECESFPGVCPNGRCVNTAGSFRCECPEGLMLDASGRLCV. Intrachain disulfides connect Cys-873–Cys-885, Cys-880–Cys-894, and Cys-896–Cys-909. Residues 915-966 form the TB 5 domain; sequence EPCFLRWDEDECGVTLPGKYRMDVCCCSIGAVWGVECEACPDPESLEFASLC. The EGF-like 12; calcium-binding domain occupies 986–1027; sequence DVNECKVFPGLCTHGTCRNTVGSFHCACAGGFALDAQERNCT. Disulfide bonds link Cys-990-Cys-1002, Cys-997-Cys-1011, Cys-1013-Cys-1026, Cys-1032-Cys-1044, Cys-1039-Cys-1053, Cys-1055-Cys-1069, Cys-1075-Cys-1087, Cys-1082-Cys-1096, Cys-1098-Cys-1111, Cys-1117-Cys-1129, Cys-1124-Cys-1138, Cys-1140-Cys-1153, Cys-1159-Cys-1170, Cys-1166-Cys-1179, Cys-1181-Cys-1194, Cys-1200-Cys-1212, Cys-1207-Cys-1221, Cys-1223-Cys-1236, Cys-1242-Cys-1254, Cys-1249-Cys-1263, Cys-1265-Cys-1278, Cys-1284-Cys-1297, Cys-1291-Cys-1306, Cys-1308-Cys-1319, Cys-1325-Cys-1338, Cys-1332-Cys-1347, Cys-1349-Cys-1360, Cys-1366-Cys-1378, Cys-1373-Cys-1387, Cys-1389-Cys-1402, Cys-1408-Cys-1419, Cys-1414-Cys-1428, Cys-1430-Cys-1443, Cys-1449-Cys-1460, Cys-1455-Cys-1469, and Cys-1471-Cys-1484. Residue Asn-1025 is glycosylated (N-linked (GlcNAc...) asparagine). An EGF-like 13; calcium-binding domain is found at 1028-1070; that stretch reads DIDECRISPDLCGQGTCVNTPGSFECECFPGYESGFMLMKNCM. Positions 1071 to 1112 constitute an EGF-like 14; calcium-binding domain; that stretch reads DVDECARDPLLCRGGTCTNTDGSYKCQCPPGHELTAKGTACE. An EGF-like 15; calcium-binding domain is found at 1113 to 1154; the sequence is DIDECSLSDGLCPHGQCVNVIGAFQCSCHAGFQSTPDRQGCV. Positions 1155-1195 constitute an EGF-like 16; calcium-binding domain; that stretch reads DINECRVQNGGCDVHCINTEGSYRCSCGQGYSLMPDGRACA. The EGF-like 17 domain maps to 1196–1237; sequence DVDECEENPRVCDQGHCTNMPGGHRCLCYDGFMATPDMRTCV. Positions 1238 to 1279 constitute an EGF-like 18; calcium-binding domain; sequence DVDECDLNPHICLHGDCENTKGSFVCHCQLGYMVRKGATGCS. An EGF-like 19; calcium-binding domain is found at 1280-1320; sequence DVDECEVGGHNCDSHASCLNIPGSFSCRCLPGWVGDGFECH. The EGF-like 20; calcium-binding domain occupies 1321–1361; that stretch reads DLDECVSQEHRCSPRGDCLNVPGSYRCTCRQGFAGDGFFCE. The region spanning 1362–1403 is the EGF-like 21; calcium-binding domain; it reads DRDECAENVDLCDNGQCLNAPGGYRCECEMGFDPTEDHRACQ. The 41-residue stretch at 1404-1444 folds into the EGF-like 22; calcium-binding domain; the sequence is DVDECAQGNLCAFGSCENLPGMFRCICNGGYELDRGGGNCT. An N-linked (GlcNAc...) asparagine glycan is attached at Asn-1442. The EGF-like 23; calcium-binding domain occupies 1445–1485; sequence DINECADPVNCINGVCINTPGSYLCSCPQDFELNPSGVGCV. The 57-residue stretch at 1490 to 1546 folds into the TB 6 domain; the sequence is GNCFLETHDRGDSGISCSAEIGVGVTRASCCCSLGRAWGNPCELCPMANTTEYRTLC. Asn-1538 carries N-linked (GlcNAc...) asparagine glycosylation. The region spanning 1563-1604 is the EGF-like 24; calcium-binding domain; sequence DIDECQELPGLCQGGDCVNTFGSFQCECPPGYHLSEHTRICE. Disulfide bonds link Cys-1567/Cys-1579, Cys-1574/Cys-1588, Cys-1590/Cys-1603, Cys-1609/Cys-1621, Cys-1616/Cys-1630, and Cys-1632/Cys-1645. One can recognise an EGF-like 25; calcium-binding domain in the interval 1605–1646; it reads DIDECSTHSGICGPGTCYNTLGNYTCVCPAEYLQVNGGNNCM. Asn-1627 is a glycosylation site (N-linked (GlcNAc...) asparagine). The TB 7 domain maps to 1651-1703; it reads SVCFRHYNGTCQNELAFNVTRKMCCCSYNIGQAWNRPCEACPTPISPDYQILC. N-linked (GlcNAc...) asparagine glycosylation is found at Asn-1658 and Asn-1668. The region spanning 1721–1762 is the EGF-like 26; calcium-binding domain; the sequence is DIDECGEIPAICANGICINQIGSFRCECPAGFNYNSILLACE. Intrachain disulfides connect Cys-1725–Cys-1737, Cys-1732–Cys-1746, Cys-1748–Cys-1761, Cys-1767–Cys-1780, Cys-1774–Cys-1789, Cys-1791–Cys-1803, Cys-1809–Cys-1821, Cys-1816–Cys-1830, Cys-1832–Cys-1845, Cys-1851–Cys-1861, Cys-1856–Cys-1870, Cys-1872–Cys-1884, Cys-1890–Cys-1903, Cys-1898–Cys-1912, Cys-1914–Cys-1927, Cys-1933–Cys-1945, Cys-1940–Cys-1954, Cys-1956–Cys-1967, Cys-1973–Cys-1985, Cys-1980–Cys-1994, and Cys-1996–Cys-2009. Positions 1763 to 1804 constitute an EGF-like 27; calcium-binding domain; the sequence is DVDECGSRESPCQQNADCINIPGSYRCKCTRGYKLSPGGACV. In terms of domain architecture, EGF-like 28 spans 1805 to 1846; it reads GRNECREIPNVCSHGDCMDTEGSYMCLCHRGFQASADQTLCM. The region spanning 1847 to 1885 is the EGF-like 29; calcium-binding domain; sequence DIDECDRQPCGNGTCKNIIGSYNCLCFPGFVVTHNGDCV. N-linked (GlcNAc...) asparagine glycosylation occurs at Asn-1858. One can recognise an EGF-like 30; calcium-binding domain in the interval 1886 to 1928; sequence DFDECTTLVGQVCRFGHCLNTAGSFHCLCQDGFELTADGKNCV. The 40-residue stretch at 1929-1968 folds into the EGF-like 31; calcium-binding domain; it reads DTNECLSLAGTCLPGTCQNLEGSFRCICPPGFQVQSDHCI. In terms of domain architecture, EGF-like 32; calcium-binding spans 1969-2010; sequence DIDECSEEPNLCLFGTCTNSPGSFQCLCPPGFVLSDNGHRCF. The 54-residue stretch at 2015 to 2068 folds into the TB 8 domain; sequence SFCFTRFEAGKCSVPKAFNTTKTRCCCSKRPGEGWGDPCELCPQEGSAAFQELC. Asn-2033 carries an N-linked (GlcNAc...) asparagine glycan. The EGF-like 33; calcium-binding domain maps to 2084–2125; that stretch reads DVNECAENPGVCTNGVCVNTDGSFRCECPFGYSLDFTGINCV. Intrachain disulfides connect Cys-2088/Cys-2100, Cys-2095/Cys-2109, Cys-2111/Cys-2124, Cys-2130/Cys-2141, Cys-2136/Cys-2150, Cys-2152/Cys-2164, Cys-2170/Cys-2181, Cys-2177/Cys-2190, Cys-2192/Cys-2205, Cys-2211/Cys-2225, Cys-2218/Cys-2234, Cys-2236/Cys-2250, Cys-2256/Cys-2268, Cys-2263/Cys-2277, and Cys-2279/Cys-2292. Positions 2126–2165 constitute an EGF-like 34; calcium-binding domain; the sequence is DTDECSVGHPCGQGTCTNVIGGFECACADGFEPGLMMTCE. The EGF-like 35; calcium-binding domain occupies 2166–2206; sequence DIDECSLNPLLCAFRCHNTEGSYLCTCPAGYTLREDGAMCR. In terms of domain architecture, EGF-like 36; calcium-binding spans 2207-2251; that stretch reads DVDECADGQQDCHARGMECKNLIGTFACVCPPGMRPLPGSGEGCT. Residues 2252–2293 enclose the EGF-like 37; calcium-binding domain; the sequence is DDNECHAQPDLCVNGRCVNTAGSFRCDCDEGFQPSPTLTECH. One can recognise a TB 9 domain in the interval 2298–2351; that stretch reads GPCFAEVLQTMCRSLSSSSEAVTRAECCCGGGRGWGPRCELCPLPGTSAYRKLC. Positions 2363-2404 constitute an EGF-like 38; calcium-binding domain; sequence DVDECRMLAHLCAHGECINSLGSFRCHCQAGYTPDATATTCL. Disulfide bonds link Cys-2367–Cys-2379, Cys-2374–Cys-2388, Cys-2390–Cys-2403, Cys-2409–Cys-2420, Cys-2416–Cys-2429, Cys-2431–Cys-2444, Cys-2450–Cys-2461, Cys-2457–Cys-2470, Cys-2472–Cys-2483, Cys-2489–Cys-2502, Cys-2496–Cys-2511, Cys-2513–Cys-2526, Cys-2532–Cys-2542, Cys-2538–Cys-2551, Cys-2553–Cys-2566, Cys-2572–Cys-2584, Cys-2579–Cys-2593, Cys-2595–Cys-2608, Cys-2614–Cys-2625, Cys-2621–Cys-2634, and Cys-2636–Cys-2648. One can recognise an EGF-like 39; calcium-binding domain in the interval 2405–2445; the sequence is DMDECSQVPKPCTFLCKNTKGSFLCSCPRGYLLEEDGRTCK. Residues 2446-2484 enclose the EGF-like 40; calcium-binding domain; it reads DLDECTSRQHNCQFLCVNTVGAFTCRCPPGFTQHHQACF. The region spanning 2485–2527 is the EGF-like 41; calcium-binding domain; sequence DNDECSAQPGPCGAHGHCHNTPGSFRCECHQGFTLVSSGHGCE. Positions 2528–2567 constitute an EGF-like 42; calcium-binding domain; the sequence is DVNECDGPHRCQHGCQNQLGGYRCSCPQGFTQHSQWAQCV. The 42-residue stretch at 2568–2609 folds into the EGF-like 43; calcium-binding domain; it reads DENECALSPPTCGSASCRNTLGGFRCVCPSGFDFDQALGGCQ. Residues 2610–2649 form the EGF-like 44; calcium-binding domain; the sequence is EVDECAGRRGPCSYSCANTPGGFLCGCPQGYFRAGQGHCV. The N-linked (GlcNAc...) asparagine glycan is linked to Asn-2713.

It belongs to the fibrillin family. Post-translationally, probably forms intermolecular disulfide bonds either with other FBN3 molecules or with other components of the microfibrils. In terms of tissue distribution, predominantly expressed in connective tissues such as skeletal muscle, tendon, skin, perichondrium and periosteum. Highly expressed in fetal lung, brain, kidney. Expressed at low level in prostate, testis, mammary gland, uterus, ovary, placenta, bladder, adrenal gland, thyroid, fetal thymus, fetal liver, liver, fetal heart and heart.

The protein localises to the secreted. Its subcellular location is the extracellular space. The protein resides in the extracellular matrix. In terms of biological role, fibrillins are structural components of 10-12 nm extracellular calcium-binding microfibrils, which occur either in association with elastin or in elastin-free bundles. Fibrillin-containing microfibrils provide long-term force bearing structural support. This Homo sapiens (Human) protein is Fibrillin-3 (FBN3).